We begin with the raw amino-acid sequence, 140 residues long: Large ribosomal subunit protein uL11 (140 aa).

The protein belongs to the universal ribosomal protein uL11 family. In terms of assembly, part of the ribosomal stalk of the 50S ribosomal subunit. Interacts with L10 and the large rRNA to form the base of the stalk. L10 forms an elongated spine to which L12 dimers bind in a sequential fashion forming a multimeric L10(L12)X complex. In terms of processing, one or more lysine residues are methylated.

Functionally, forms part of the ribosomal stalk which helps the ribosome interact with GTP-bound translation factors. The polypeptide is Large ribosomal subunit protein uL11 (Geobacter metallireducens (strain ATCC 53774 / DSM 7210 / GS-15)).